The primary structure comprises 685 residues: ATP-dependent zinc metalloprotease FTSH 8, chloroplastic (685 aa).

Residues 1 to 37 constitute a chloroplast transit peptide; that stretch reads MAASSACLLGNGLSVYTTKQRFQKLGLDRTSKVTVVK. Residues 38–73 constitute a thylakoid transit peptide; it reads ASLDEKKHEGRRGFFKLLLGNAAAGVGLLASGNANA. The Lumenal, thylakoid segment spans residues 38 to 161; the sequence is ASLDEKKHEG…HNAQEDQGSP (124 aa). Residues 162-182 traverse the membrane as a helical segment; that stretch reads ILNLIGNLAFPVILIGGLFLL. The Stromal segment spans residues 183–685; it reads SRRSSGGMGG…STSTPTPASV (503 aa). Residue 260-267 coordinates ATP; it reads GPPGTGKT. Histidine 481 contributes to the Zn(2+) binding site. Glutamate 482 is a catalytic residue. Histidine 485 and aspartate 559 together coordinate Zn(2+).

This sequence in the N-terminal section; belongs to the AAA ATPase family. It in the C-terminal section; belongs to the peptidase M41 family. In terms of assembly, heterohexamers with FTSH1, FTSH2 and FTSH5. May also form homooligomers. Requires Zn(2+) as cofactor. Expressed in cotyledons, cauline and rosette leaves, stems, sepals, flovers and siliques. Very low in roots.

It localises to the plastid. The protein resides in the chloroplast thylakoid membrane. In terms of biological role, part of a complex that function as an ATP-dependent zinc metallopeptidase. Involved in the thylakoid formation and in the removal of damaged D1 in the photosystem II, preventing cell death under high-intensity light conditions. The chain is ATP-dependent zinc metalloprotease FTSH 8, chloroplastic (FTSH8) from Arabidopsis thaliana (Mouse-ear cress).